The following is a 618-amino-acid chain: Serine--tRNA ligase, cytoplasmic (618 aa).

L-serine is bound at residue 417 to 419 (TSE). 448 to 450 (RTE) contributes to the ATP binding site. An L-serine-binding site is contributed by glutamate 472. ATP is bound at residue 536 to 539 (EVSS). Serine 570 is an L-serine binding site.

It belongs to the class-II aminoacyl-tRNA synthetase family. Type-1 seryl-tRNA synthetase subfamily. In terms of assembly, homodimer. The tRNA molecule binds across the dimer.

The protein localises to the cytoplasm. The catalysed reaction is tRNA(Ser) + L-serine + ATP = L-seryl-tRNA(Ser) + AMP + diphosphate + H(+). The enzyme catalyses tRNA(Sec) + L-serine + ATP = L-seryl-tRNA(Sec) + AMP + diphosphate + H(+). The protein operates within aminoacyl-tRNA biosynthesis; selenocysteinyl-tRNA(Sec) biosynthesis; L-seryl-tRNA(Sec) from L-serine and tRNA(Sec): step 1/1. In terms of biological role, catalyzes the attachment of serine to tRNA(Ser). Is also able to aminoacylate tRNA(Sec) with serine, to form the misacylated tRNA L-seryl-tRNA(Sec), which will be further converted into selenocysteinyl-tRNA(Sec). The polypeptide is Serine--tRNA ligase, cytoplasmic (Plasmodium falciparum (isolate 3D7)).